Reading from the N-terminus, the 348-residue chain is MIPATYTLSQITARLGGEWRGEDISVTAVRPLADAQAEHISFLANPKYKAEVHDSSAGAVIVSAKAADGFEGRNLIVADDPYLYFAKVARLFSPVVKARGGIHPTAVVEPGATVPTSCEIGANVYIGANTVLGEGCRILANAVVQHDCKLGDEVVLHPNAVVYYGCTLGRRVEIHSGAVIGADGFGLAFADDSWFKIPQTGAVTLGDDVEIGSNTNIDRGAMSDTTVGNGTKIDNQVQIGHNCKIGSHTVIAAKTGISGSVTIGSYCIIGGGVGTVGHIEIADKTTIGGGTSVTHSITESGKHLAGIFPMSTHKEWARNAVYIHRLSEMNKRLKTLEQQLSDAGQDSK.

The Proton acceptor role is filled by His-241.

The protein belongs to the transferase hexapeptide repeat family. LpxD subfamily. As to quaternary structure, homotrimer.

It carries out the reaction a UDP-3-O-[(3R)-3-hydroxyacyl]-alpha-D-glucosamine + a (3R)-hydroxyacyl-[ACP] = a UDP-2-N,3-O-bis[(3R)-3-hydroxyacyl]-alpha-D-glucosamine + holo-[ACP] + H(+). The protein operates within bacterial outer membrane biogenesis; LPS lipid A biosynthesis. Functionally, catalyzes the N-acylation of UDP-3-O-acylglucosamine using 3-hydroxyacyl-ACP as the acyl donor. Is involved in the biosynthesis of lipid A, a phosphorylated glycolipid that anchors the lipopolysaccharide to the outer membrane of the cell. This is UDP-3-O-acylglucosamine N-acyltransferase from Neisseria meningitidis serogroup B (strain ATCC BAA-335 / MC58).